A 109-amino-acid chain; its full sequence is Cell division suppressor protein YneA (109 aa).

Residues 39-90 (SEVNVSEGDSLWALADQYAGKSDMAKADFVSWVEKENNLADGHVEAGDSVVI) form the LysM domain.

Belongs to the YneA family.

Its subcellular location is the cytoplasm. Functionally, inhibits cell division during the SOS response. Affects a later stage of the cell division protein assembly, after the assembly of the Z ring, by probably suppressing recruitment of FtsL and/or DivIC to the division machinery. The polypeptide is Cell division suppressor protein YneA (Listeria monocytogenes serotype 4b (strain CLIP80459)).